The chain runs to 220 residues: Nucleolar protein 12 (220 aa).

Residues 31 to 86 (HKRKMQRRKTAVEEIKRKIKEEQKKMKEERHKEYMKMLKEREEALCELEENDELEE) adopt a coiled-coil conformation. The interval 109 to 220 (ISDLDLSGIR…QTGKTRRRRN (112 aa)) is disordered. Residues 139 to 148 (EKGADEEKPK) are compositionally biased toward basic and acidic residues. Basic residues-rich tracts occupy residues 176–186 (RSQRKSGKRPS) and 205–220 (KTQR…RRRN).

Belongs to the RRP17 family.

Its subcellular location is the nucleus. It is found in the nucleolus. May bind to rRNA. This chain is Nucleolar protein 12 (nol12), found in Xenopus laevis (African clawed frog).